The primary structure comprises 568 residues: Chaperonin homolog Hsp-60, mitochondrial (568 aa).

It belongs to the chaperonin (HSP60) family.

It localises to the mitochondrion matrix. Implicated in mitochondrial protein import and macromolecular assembly. May facilitate the correct folding of imported proteins. May also prevent misfolding and promote the refolding and proper assembly of unfolded polypeptides generated under stress conditions in the mitochondrial matrix. The sequence is that of Chaperonin homolog Hsp-60, mitochondrial (hsp-60) from Caenorhabditis elegans.